A 168-amino-acid chain; its full sequence is Cyclin-dependent kinase 4 inhibitor C (168 aa).

ANK repeat units lie at residues 4 to 33 (PWGN…NVNA), 37 to 65 (FGRT…NPNL), 69 to 98 (TGFA…DVNI), 102 to 132 (EGNL…NVGH), and 136 to 165 (KGDT…GGAT).

This sequence belongs to the CDKN2 cyclin-dependent kinase inhibitor family. As to quaternary structure, heterodimer of p18 with CDK6.

In terms of biological role, interacts strongly with CDK6, weakly with CDK4. Inhibits cell growth and proliferation with a correlated dependence on endogenous retinoblastoma protein RB. The chain is Cyclin-dependent kinase 4 inhibitor C (Cdkn2c) from Mus musculus (Mouse).